The chain runs to 146 residues: Hemoglobin subunit beta (146 aa).

N-acetylvaline is present on valine 1. In terms of domain architecture, Globin spans 2–146 (HLTGEEKAAV…VANALAHKYH (145 aa)). Threonine 12 is subject to Phosphothreonine. Serine 44 carries the post-translational modification Phosphoserine. Lysine 59 is subject to N6-acetyllysine. Residue histidine 63 coordinates heme b. Residue lysine 82 is modified to N6-acetyllysine. Position 92 (histidine 92) interacts with heme b. The residue at position 93 (cysteine 93) is an S-nitrosocysteine. N6-acetyllysine is present on lysine 144.

The protein belongs to the globin family. Heterotetramer of two alpha chains and two beta chains. As to expression, red blood cells.

Involved in oxygen transport from the lung to the various peripheral tissues. The chain is Hemoglobin subunit beta (HBB) from Ailurus fulgens (Himalayan red panda).